We begin with the raw amino-acid sequence, 56 residues long: UPF0434 protein CbuK_1382 (56 aa).

The protein belongs to the UPF0434 family.

The protein is UPF0434 protein CbuK_1382 of Coxiella burnetii (strain CbuK_Q154) (Coxiella burnetii (strain Q154)).